The primary structure comprises 873 residues: Programmed cell death 6-interacting protein (873 aa).

A2 is subject to N-acetylalanine. The 395-residue stretch at S3–A397 folds into the BRO1 domain. Residues T176–V508 form an interaction with CHMP4A, CHMP4B and CHMP4C region. An N6-acetyllysine modification is found at K215. Positions L423–Q873 are interaction with SDCBP. Residue T484 is modified to Phosphothreonine. The residue at position 486 (S486) is a Phosphoserine. Residues V508–Q873 are self-association. 2 disordered regions span residues A719–Y808 and P837–Q873. An interaction with TSG101 region spans residues P722 to P725. Phosphoserine is present on S735. 2 positions are modified to phosphothreonine: T742 and T745. Residues T745–L767 show a composition bias toward pro residues. Residue R749 is modified to Omega-N-methylarginine. Residues P768–P791 are compositionally biased toward low complexity. Pro residues-rich tracts occupy residues P792–Y808 and A849–P865. Positions Q802–Y811 are interaction with CEP55.

As to quaternary structure, self-associates. Interacts with SH3KBP1. Interacts with PDCD6 in a calcium-dependent manner. Interacts with TSG101 in a calcium-dependent manner; PDCD6IP homooligomerization may be required for TSG101-binding. Interacts with SGSM3. Directly interacts with CHMP4A, CHMP4B and CHMP4C. Directly interacts with CEP55 in a 1:2 stoechiometry; this interaction is required for PDCD6IP targeting to the midbody. May interact with PDGFRB. Interacts with SH3GL1 and SH3GL2/endophilin-1. Forms a complex with SDCBP and SDC2. Found in a complex with F-actin, TJP1/ZO-1 and PARD3. Interacts with CD2AP. Interacts with ARRDC1. Interacts (via BRO1 domain) with the ATG12-ATG3 conjugate; this interaction is bridged by ATG12 and promotes multiple PDCD6IP-mediated functions such as endolysosomal trafficking, macroautophagy and exosome biogenesis. May be phosphorylated on tyrosine residues by activated PDGFRB. As to expression, expressed in astrocytes and glioma cells.

It is found in the cytoplasm. The protein resides in the cytosol. The protein localises to the melanosome. Its subcellular location is the cytoskeleton. It localises to the microtubule organizing center. It is found in the centrosome. The protein resides in the secreted. The protein localises to the extracellular exosome. Its subcellular location is the cell junction. It localises to the tight junction. It is found in the midbody. The protein resides in the midbody ring. Multifunctional protein involved in endocytosis, multivesicular body biogenesis, membrane repair, cytokinesis, apoptosis and maintenance of tight junction integrity. Class E VPS protein involved in concentration and sorting of cargo proteins of the multivesicular body (MVB) for incorporation into intralumenal vesicles (ILVs) that are generated by invagination and scission from the limiting membrane of the endosome. Binds to the phospholipid lysobisphosphatidic acid (LBPA) which is abundant in MVBs internal membranes. The MVB pathway requires the sequential function of ESCRT-O, -I,-II and -III complexes. The ESCRT machinery also functions in topologically equivalent membrane fission events, such as the terminal stages of cytokinesis. Adapter for a subset of ESCRT-III proteins, such as CHMP4, to function at distinct membranes. Required for completion of cytokinesis. May play a role in the regulation of both apoptosis and cell proliferation. Regulates exosome biogenesis in concert with SDC1/4 and SDCBP. By interacting with F-actin, PARD3 and TJP1 secures the proper assembly and positioning of actomyosin-tight junction complex at the apical sides of adjacent epithelial cells that defines a spatial membrane domain essential for the maintenance of epithelial cell polarity and barrier. This chain is Programmed cell death 6-interacting protein, found in Rattus norvegicus (Rat).